The primary structure comprises 178 residues: Adenine phosphoribosyltransferase (178 aa).

This sequence belongs to the purine/pyrimidine phosphoribosyltransferase family. Homodimer.

It is found in the cytoplasm. It carries out the reaction AMP + diphosphate = 5-phospho-alpha-D-ribose 1-diphosphate + adenine. It participates in purine metabolism; AMP biosynthesis via salvage pathway; AMP from adenine: step 1/1. In terms of biological role, catalyzes a salvage reaction resulting in the formation of AMP, that is energically less costly than de novo synthesis. The protein is Adenine phosphoribosyltransferase of Helicobacter hepaticus (strain ATCC 51449 / 3B1).